The primary structure comprises 427 residues: Trigger factor (427 aa).

In terms of domain architecture, PPIase FKBP-type spans 163-248; it reads GDIVVIDFAG…LKEIKRKELA (86 aa).

The protein belongs to the FKBP-type PPIase family. Tig subfamily.

It localises to the cytoplasm. It catalyses the reaction [protein]-peptidylproline (omega=180) = [protein]-peptidylproline (omega=0). Its function is as follows. Involved in protein export. Acts as a chaperone by maintaining the newly synthesized protein in an open conformation. Functions as a peptidyl-prolyl cis-trans isomerase. This chain is Trigger factor, found in Carboxydothermus hydrogenoformans (strain ATCC BAA-161 / DSM 6008 / Z-2901).